We begin with the raw amino-acid sequence, 37 residues long: Large ribosomal subunit protein bL36 (37 aa).

It belongs to the bacterial ribosomal protein bL36 family.

In Dechloromonas aromatica (strain RCB), this protein is Large ribosomal subunit protein bL36.